The chain runs to 72 residues: Translation initiation factor IF-1 (72 aa).

The region spanning 2-72 (AKDDVIEVDG…TRGRITYRFK (71 aa)) is the S1-like domain.

It belongs to the IF-1 family. As to quaternary structure, component of the 30S ribosomal translation pre-initiation complex which assembles on the 30S ribosome in the order IF-2 and IF-3, IF-1 and N-formylmethionyl-tRNA(fMet); mRNA recruitment can occur at any time during PIC assembly.

The protein localises to the cytoplasm. One of the essential components for the initiation of protein synthesis. Stabilizes the binding of IF-2 and IF-3 on the 30S subunit to which N-formylmethionyl-tRNA(fMet) subsequently binds. Helps modulate mRNA selection, yielding the 30S pre-initiation complex (PIC). Upon addition of the 50S ribosomal subunit IF-1, IF-2 and IF-3 are released leaving the mature 70S translation initiation complex. The protein is Translation initiation factor IF-1 of Lactococcus lactis subsp. lactis (strain IL1403) (Streptococcus lactis).